The following is a 289-amino-acid chain: Diaminopimelate epimerase (289 aa).

Residues Asn11 and Asn78 each contribute to the substrate site. Cys87 serves as the catalytic Proton donor. Residues 88–89, Asn163, Asn199, and 217–218 each bind substrate; these read GN and ER. Cys226 acts as the Proton acceptor in catalysis. 227-228 lines the substrate pocket; sequence GT.

It belongs to the diaminopimelate epimerase family. As to quaternary structure, homodimer.

Its subcellular location is the cytoplasm. The enzyme catalyses (2S,6S)-2,6-diaminopimelate = meso-2,6-diaminopimelate. The protein operates within amino-acid biosynthesis; L-lysine biosynthesis via DAP pathway; DL-2,6-diaminopimelate from LL-2,6-diaminopimelate: step 1/1. Its function is as follows. Catalyzes the stereoinversion of LL-2,6-diaminopimelate (L,L-DAP) to meso-diaminopimelate (meso-DAP), a precursor of L-lysine and an essential component of the bacterial peptidoglycan. The sequence is that of Diaminopimelate epimerase from Rhodococcus opacus (strain B4).